The following is a 283-amino-acid chain: 2-heptyl-4(1H)-quinolone synthase subunit PqsB (283 aa).

It belongs to the thiolase-like superfamily. FabH family. As to quaternary structure, forms a tight complex with PqsC.

The protein localises to the cytoplasm. Activity of the complex is inhibited by 2-aminoacetophenone (2-AA). In terms of biological role, required for the biosynthesis of the quorum-sensing signaling molecules 2-heptyl-4(1H)-quinolone (HHQ) and 2-heptyl-3-hydroxy-4(1H)-quinolone (Pseudomonas quinolone signal or PQS), which are important for biofilm formation and virulence. The PqsC/PqsB complex catalyzes the condensation of 2-aminobenzoylacetate (2-ABA) and octanoyl-CoA to form HHQ. PqsB, together with PqsC, catalyzes the coupling of 2-ABA with the octanoate group, leading to decarboxylation and dehydration, and resulting in closure of the quinoline ring. PqsB is probably required for the proper folding of PqsC rather than for a direct enzymatic role in the process. The polypeptide is 2-heptyl-4(1H)-quinolone synthase subunit PqsB (Pseudomonas aeruginosa (strain ATCC 15692 / DSM 22644 / CIP 104116 / JCM 14847 / LMG 12228 / 1C / PRS 101 / PAO1)).